The following is a 243-amino-acid chain: Transmembrane protein 174 (243 aa).

2 helical membrane passes run 40–60 and 73–93; these read LLFS…MGWI and LLGP…VCKF.

As to quaternary structure, interacts with SLC34A1; regulates SLC34A1 internalization by PTH and FGF23. Kidney specific. Expressed in renal primary proximal tubule cells.

Its subcellular location is the endoplasmic reticulum membrane. The protein resides in the apical cell membrane. In terms of biological role, regulator of plasma phosphate homeostasis. Decreases serum inorganic phosphate (Pi) uptake by regulating the sodium-phosphate cotransporter SLC34A1 trafficking by PTH and FGF23 in the kidney. This Mus musculus (Mouse) protein is Transmembrane protein 174 (Tmem174).